Reading from the N-terminus, the 670-residue chain is Probable beta-glucosidase N (670 aa).

Positions 1-21 (MHSNILPVLTSVATLLGLVQG) are cleaved as a signal peptide. An N-linked (GlcNAc...) asparagine glycan is attached at Asn-51. Residues 65–87 (FEPSDGVRSVQGSGKDYDNPAMR) form a disordered region. N-linked (GlcNAc...) asparagine glycosylation occurs at Asn-141. The active site involves Asp-152. N-linked (GlcNAc...) asparagine glycans are attached at residues Asn-184, Asn-248, Asn-330, and Asn-417.

It belongs to the glycosyl hydrolase 3 family.

The protein localises to the secreted. The catalysed reaction is Hydrolysis of terminal, non-reducing beta-D-glucosyl residues with release of beta-D-glucose.. It functions in the pathway glycan metabolism; cellulose degradation. Functionally, beta-glucosidases are one of a number of cellulolytic enzymes involved in the degradation of cellulosic biomass. Catalyzes the last step releasing glucose from the inhibitory cellobiose. The chain is Probable beta-glucosidase N (bglN) from Emericella nidulans (strain FGSC A4 / ATCC 38163 / CBS 112.46 / NRRL 194 / M139) (Aspergillus nidulans).